Here is a 392-residue protein sequence, read N- to C-terminus: Phospho-N-acetylmuramoyl-pentapeptide-transferase (392 aa).

The next 10 membrane-spanning stretches (helical) occupy residues 28–48, 74–94, 100–120, 137–157, 193–213, 225–245, 262–282, 289–309, 314–334, and 369–389; these read RALM…PYVI, TPTM…LMWF, FVWI…VDDW, YFWQ…SISE, VSYP…IVGA, GLAI…AYVT, SGEL…FLWF, VFMG…IAVI, IVFF…MAQV, and QVVV…LSTL.

The protein belongs to the glycosyltransferase 4 family. MraY subfamily. It depends on Mg(2+) as a cofactor.

It localises to the cell inner membrane. The enzyme catalyses UDP-N-acetyl-alpha-D-muramoyl-L-alanyl-gamma-D-glutamyl-meso-2,6-diaminopimeloyl-D-alanyl-D-alanine + di-trans,octa-cis-undecaprenyl phosphate = di-trans,octa-cis-undecaprenyl diphospho-N-acetyl-alpha-D-muramoyl-L-alanyl-D-glutamyl-meso-2,6-diaminopimeloyl-D-alanyl-D-alanine + UMP. It participates in cell wall biogenesis; peptidoglycan biosynthesis. Functionally, catalyzes the initial step of the lipid cycle reactions in the biosynthesis of the cell wall peptidoglycan: transfers peptidoglycan precursor phospho-MurNAc-pentapeptide from UDP-MurNAc-pentapeptide onto the lipid carrier undecaprenyl phosphate, yielding undecaprenyl-pyrophosphoryl-MurNAc-pentapeptide, known as lipid I. The sequence is that of Phospho-N-acetylmuramoyl-pentapeptide-transferase from Variovorax paradoxus (strain S110).